We begin with the raw amino-acid sequence, 780 residues long: MENRFQNDTLFSEWFGQSLSDVRFPDNVTVYSQADSAVSFENVRQPIKLVRAAMGSGKTTALIHFLKQVPKELSVLLISCRKTFAAEILHRFTLNGLEDFELYCDITERQINNRKVIVQIESLHRLTENYDVLILDEIMSIIKQFYSKTMTKTKEVDCKFLSLIKNSSHVIAMDATLTRHVVEFFAAFKPDTQIALIRNTFVSAMFSNRVAYFCDTFFGKEFSFFARLEDKLRWDKKLCLFCSTVLAAEYMHDLIRSRFSLKKVLLLTSKQGKCSSIESWIRYDVVIYTSVVTVGLSFEPVYFSSLFVYIQLAKGGPDMVSIFQSIGRVRRVIDEDIYIYMNPVLIKSYDPLAPIAMPPCSDWSVAEQSIISESCIDFRGKCSGAHKYNFCSVLKCLFRYRHYIEKTTITSLSDSLFLLCSLLCENSIKVDIVGNGFPMRKEVFLSFLQILVEECHFIEKKITLPGDNMTFQEIISSRETIMNGDFYENGNQLLHKDYITDMGKFRATFLSPGVDIFIASDIVSDLKNESKRYVFVNVWLQKCVSAGVESTRIERVFNERIKSYVLPKSFLCDEYFVLGDISGVYEWGMLIDLAFLAEMIRKDLKLKSCTDTTTDISEDDLLLCAARRSSDILQIMQLVFTVHVQFFQRYSLQTLQLFNKLRGMRIVTGVFSIEKFSISILRLFFKCAFNMTLSASKPRYIPGKAYRNLTKNDLENMLDNWEISRTNLKTCKELRKALTEASRARRKQTIYKLQGSDISLSVSEVGVFGQHASPGVCVSS.

The Helicase ATP-binding domain maps to 39-195; the sequence is SFENVRQPIK…AAFKPDTQIA (157 aa). Residue 52-59 coordinates ATP; it reads AAMGSGKT.

This sequence belongs to the herpesviridae OriBP family.

Probably involved in DNA replication. Binds the origin of replication (ori). The sequence is that of Replication origin-binding protein (U73) from Homo sapiens (Human).